The following is a 63-amino-acid chain: VVYTDCTESGQNLCLCEGSNVCGQGNKCILGSDGEKNQCVTGEGTPGPQSHNDGDFEEPEEYL.

An interaction with thrombin active site region spans residues 1 to 3 (VVY). 3 disulfides stabilise this stretch: Cys-6-Cys-14, Cys-16-Cys-28, and Cys-22-Cys-39. The segment at 39–63 (CVTGEGTPGPQSHNDGDFEEPEEYL) is disordered. A glycan (O-linked (GalNAc...) threonine) is linked at Thr-45. Positions 55–63 (DFEEPEEYL) are interaction with fibrinogen-binding exosite of thrombin. Tyr-62 carries the post-translational modification Sulfotyrosine.

It belongs to the protease inhibitor I14 (hirudin) family.

It is found in the secreted. Hirudin is a potent thrombin-specific protease inhibitor. It forms a stable non-covalent complex with alpha-thrombin, thereby abolishing its ability to cleave fibrinogen. The sequence is that of Hirudin from Poecilobdella viridis (Indian freshwater leech).